The following is a 280-amino-acid chain: 2,3,4,5-tetrahydropyridine-2,6-dicarboxylate N-succinyltransferase (280 aa).

Arg109 and Asp146 together coordinate substrate.

Belongs to the transferase hexapeptide repeat family. In terms of assembly, homotrimer.

The protein localises to the cytoplasm. The catalysed reaction is (S)-2,3,4,5-tetrahydrodipicolinate + succinyl-CoA + H2O = (S)-2-succinylamino-6-oxoheptanedioate + CoA. The protein operates within amino-acid biosynthesis; L-lysine biosynthesis via DAP pathway; LL-2,6-diaminopimelate from (S)-tetrahydrodipicolinate (succinylase route): step 1/3. The polypeptide is 2,3,4,5-tetrahydropyridine-2,6-dicarboxylate N-succinyltransferase (Blochmanniella floridana).